The sequence spans 417 residues: Cotranscriptional regulator ARB2A (417 aa).

The first 18 residues, 1–18 (MSISLSSLIFLPIWINMA), serve as a signal peptide directing secretion. The N-linked (GlcNAc...) asparagine glycan is linked to Asn-26. The tract at residues 208-248 (KQKMHKQSSSSDGTDEPAGKRERRDKVSKETKKRRDFYEKY) is disordered. A compositionally biased stretch (basic and acidic residues) spans 224–237 (PAGKRERRDKVSKE). The Nucleophile role is filled by Ser-294. Positions 398–417 (SSSQKPALTRRSHRIKHEEL) are disordered. Residues 405–417 (LTRRSHRIKHEEL) are compositionally biased toward basic residues. The Prevents secretion from ER motif lies at 414–417 (HEEL).

This sequence belongs to the ARB2A family. As to quaternary structure, interacts with AGO2. Found in a complex, composed of AGO2, CHD7 and ARB2A.

It localises to the nucleus. It is found in the cytoplasm. The protein resides in the endoplasmic reticulum. Its function is as follows. Plays a role in the regulation of alternative splicing, by interacting with AGO2 and CHD7. Seems to be required for stabilizing protein-protein interactions at the chromatin-spliceosome interface. May have hydrolase activity. The sequence is that of Cotranscriptional regulator ARB2A (Arb2a) from Mus musculus (Mouse).